A 151-amino-acid chain; its full sequence is UPF0208 membrane protein YE1335 (151 aa).

The next 2 helical transmembrane spans lie at 46-66 (FGIR…IALG) and 69-89 (LGPA…GLWW).

Belongs to the UPF0208 family.

Its subcellular location is the cell inner membrane. In Yersinia enterocolitica serotype O:8 / biotype 1B (strain NCTC 13174 / 8081), this protein is UPF0208 membrane protein YE1335.